The primary structure comprises 251 residues: PF03932 family protein CutC (251 aa).

Belongs to the CutC family.

It is found in the cytoplasm. The protein is PF03932 family protein CutC of Edwardsiella ictaluri (strain 93-146).